We begin with the raw amino-acid sequence, 395 residues long: Argininosuccinate synthase (395 aa).

ATP-binding positions include 6 to 14 (AYSGGLDTS) and A33. Y84 lines the L-citrulline pocket. G114 contributes to the ATP binding site. L-aspartate is bound by residues T116, N120, and D121. N120 contacts L-citrulline. The L-citrulline site is built by R124, S173, S182, E258, and Y270.

It belongs to the argininosuccinate synthase family. Type 1 subfamily. As to quaternary structure, homotetramer.

Its subcellular location is the cytoplasm. The enzyme catalyses L-citrulline + L-aspartate + ATP = 2-(N(omega)-L-arginino)succinate + AMP + diphosphate + H(+). It functions in the pathway amino-acid biosynthesis; L-arginine biosynthesis; L-arginine from L-ornithine and carbamoyl phosphate: step 2/3. This chain is Argininosuccinate synthase, found in Rhodococcoides fascians (Rhodococcus fascians).